We begin with the raw amino-acid sequence, 313 residues long: Porphobilinogen deaminase (313 aa).

S-(dipyrrolylmethanemethyl)cysteine is present on C242.

Belongs to the HMBS family. Monomer. Dipyrromethane serves as cofactor.

It catalyses the reaction 4 porphobilinogen + H2O = hydroxymethylbilane + 4 NH4(+). It functions in the pathway porphyrin-containing compound metabolism; protoporphyrin-IX biosynthesis; coproporphyrinogen-III from 5-aminolevulinate: step 2/4. In terms of biological role, tetrapolymerization of the monopyrrole PBG into the hydroxymethylbilane pre-uroporphyrinogen in several discrete steps. This is Porphobilinogen deaminase from Marinobacter nauticus (strain ATCC 700491 / DSM 11845 / VT8) (Marinobacter aquaeolei).